Reading from the N-terminus, the 126-residue chain is Histone H2B 5 (126 aa).

A compositionally biased stretch (low complexity) spans 1 to 12 (MPEPAKSAPAPK). A disordered region spans residues 1-35 (MPEPAKSAPAPKKGSKKAVTKTQKKGDKKRRKSRK). Lys6 and Lys13 each carry N6-acetyllysine. A compositionally biased stretch (basic residues) spans 13–34 (KGSKKAVTKTQKKGDKKRRKSR). Ser15 bears the Phosphoserine mark. Residues Lys16 and Lys21 each carry the N6-acetyllysine modification. O-linked (GlcNAc) serine glycosylation occurs at Ser113. A Glycyl lysine isopeptide (Lys-Gly) (interchain with G-Cter in ubiquitin) cross-link involves residue Lys121.

The protein belongs to the histone H2B family. In terms of assembly, the nucleosome is a histone octamer containing two molecules each of H2A, H2B, H3 and H4 assembled in one H3-H4 heterotetramer and two H2A-H2B heterodimers. The octamer wraps approximately 147 bp of DNA. Post-translationally, monoubiquitination of Lys-121 by the BRE1 gives a specific tag for epigenetic transcriptional activation and is also prerequisite for histone H3 'Lys-4' and 'Lys-79' methylation. In terms of processing, phosphorylated on Ser-15 during apoptosis; which facilitates apoptotic chromatin condensation. GlcNAcylation at Ser-113 promotes monoubiquitination of Lys-121. It fluctuates in response to extracellular glucose, and associates with transcribed genes.

The protein localises to the nucleus. It localises to the chromosome. Core component of nucleosome. Nucleosomes wrap and compact DNA into chromatin, limiting DNA accessibility to the cellular machineries which require DNA as a template. Histones thereby play a central role in transcription regulation, DNA repair, DNA replication and chromosomal stability. DNA accessibility is regulated via a complex set of post-translational modifications of histones, also called histone code, and nucleosome remodeling. This chain is Histone H2B 5 (H2B-V), found in Gallus gallus (Chicken).